A 267-amino-acid chain; its full sequence is 14-3-3-like protein GF14 phi (267 aa).

N-acetylalanine is present on Ala-2. Ser-73 and Ser-196 each carry phosphoserine. Thr-217 bears the Phosphothreonine mark. The interval 244–267 (MQDESPEEIKEAAAPKPAEEQKEI) is disordered. Ser-248 is modified (phosphoserine). Residues 250-267 (EEIKEAAAPKPAEEQKEI) are compositionally biased toward basic and acidic residues.

This sequence belongs to the 14-3-3 family. In terms of assembly, interacts with FD. Interacts with CINV1.

It is found in the nucleus. The protein resides in the cytoplasm. Functionally, is associated with a DNA binding complex that binds to the G box, a well-characterized cis-acting DNA regulatory element found in plant genes. In Arabidopsis thaliana (Mouse-ear cress), this protein is 14-3-3-like protein GF14 phi (GRF4).